A 227-amino-acid chain; its full sequence is Small heat shock protein hspG3 (227 aa).

The 197-residue stretch at asparagine 31–asparagine 227 folds into the sHSP domain. Residues glutamine 119–threonine 164 are disordered.

This sequence belongs to the small heat shock protein (HSP20) family.

In Dictyostelium discoideum (Social amoeba), this protein is Small heat shock protein hspG3 (hspG3).